The primary structure comprises 514 residues: Sugar transport protein 4 (514 aa).

At Met-1–Lys-22 the chain is on the cytoplasmic side. The next 12 helical transmembrane spans lie at Val-23–Ile-43, Leu-80–Ser-100, Phe-117–Ile-137, Ile-140–Met-160, Gly-172–Ala-192, Ile-202–Pro-222, Leu-283–Phe-303, Leu-321–Val-341, Ile-348–Ile-368, Leu-387–Gly-407, Ile-426–Leu-446, and Phe-451–Met-471. At Leu-472–Val-514 the chain is on the cytoplasmic side.

It belongs to the major facilitator superfamily. Sugar transporter (TC 2.A.1.1) family. Mostly in flowers and roots, especially in anthers, including pollen, and root tips. Also present in some hydathodes.

The protein localises to the cell membrane. Its function is as follows. Mediates an active uptake of hexoses, probably by sugar/hydrogen symport. Can transport glucose, methylglucose, galactose, xylose and mannose, but not fructose. This Arabidopsis thaliana (Mouse-ear cress) protein is Sugar transport protein 4 (STP4).